The sequence spans 369 residues: Pulmonary surfactant-associated protein D (369 aa).

An N-terminal signal peptide occupies residues 1–20; the sequence is MLLLPLSVLLLLTQPWRSLG. S-nitrosocysteine occurs at positions 35 and 40. Residues 41 to 215 are disordered; that stretch reads SPPEDGLPGR…ERGAKGESGL (175 aa). The Collagen-like domain maps to 46-216; it reads GLPGRDGRDG…RGAKGESGLA (171 aa). The span at 47-65 shows a compositional bias: basic and acidic residues; the sequence is LPGRDGRDGREGPRGEKGD. P78 is subject to 4-hydroxyproline. A 5-hydroxylysine modification is found at K87. N90 is a glycosylation site (N-linked (GlcNAc...) asparagine). Position 96 is a 4-hydroxyproline (P96). K99 carries the 5-hydroxylysine modification. Gly residues predominate over residues 139-148; it reads GPKGGVGAPG. A 4-hydroxyproline mark is found at P165 and P171. Over residues 165–191 the composition is skewed to low complexity; it reads PGEPGAPGRAGAPGPAGAIGPQGPSGA. Basic and acidic residues predominate over residues 198–210; that stretch reads KGDRGTPGERGAK. Residues 217 to 248 are a coiled coil; sequence EVNALRQRVGILEGQLQRLQNAFSQYKKAMLF. Residues 254 to 369 enclose the C-type lectin domain; it reads VGEKIFKTEG…GEQRLVICEF (116 aa). 2 disulfides stabilise this stretch: C275–C367 and C345–C359.

This sequence belongs to the SFTPD family. In terms of assembly, oligomeric complex of 4 set of homotrimers. Post-translationally, hydroxylation on proline residues within the sequence motif, GXPG, is most likely to be 4-hydroxy as this fits the requirement for 4-hydroxylation in vertebrates. In terms of processing, S-nitrosylation at Cys-35 and Cys-40 alters the quaternary structure which results in a pro-inflammatory chemoattractive signaling activity with macrophages.

The protein localises to the secreted. It localises to the extracellular space. It is found in the extracellular matrix. The protein resides in the surface film. Contributes to the lung's defense against inhaled microorganisms, organic antigens and toxins. Interacts with compounds such as bacterial lipopolysaccharides, oligosaccharides and fatty acids and modulates leukocyte action in immune response. May participate in the extracellular reorganization or turnover of pulmonary surfactant. Binds strongly maltose residues and to a lesser extent other alpha-glucosyl moieties. The protein is Pulmonary surfactant-associated protein D (SFTPD) of Bos taurus (Bovine).